We begin with the raw amino-acid sequence, 493 residues long: Bifunctional protein GlmU (493 aa).

Residues 1 to 246 (MTGELDVDGE…SWLVAGINDR (246 aa)) form a pyrophosphorylase region. UDP-N-acetyl-alpha-D-glucosamine contacts are provided by residues 21–24 (LAAG), K35, Q88, 93–94 (GT), 117–119 (SGD), G156, E171, N186, and N244. D119 is a binding site for Mg(2+). N244 is a Mg(2+) binding site. The interval 247–267 (VQLTAAATELNARIIRRWQLA) is linker. The interval 268–493 (GVTIHDPRTT…DGPADDASDA (226 aa)) is N-acetyltransferase. 2 residues coordinate UDP-N-acetyl-alpha-D-glucosamine: R349 and K367. H379 acts as the Proton acceptor in catalysis. Y382 and N393 together coordinate UDP-N-acetyl-alpha-D-glucosamine. Acetyl-CoA is bound by residues A396, 402–403 (NY), S421, and A439. Residues 470–493 (RPGTPEARAAVEAADGPADDASDA) form a disordered region.

It in the N-terminal section; belongs to the N-acetylglucosamine-1-phosphate uridyltransferase family. In the C-terminal section; belongs to the transferase hexapeptide repeat family. In terms of assembly, homotrimer. Requires Mg(2+) as cofactor.

It is found in the cytoplasm. It catalyses the reaction alpha-D-glucosamine 1-phosphate + acetyl-CoA = N-acetyl-alpha-D-glucosamine 1-phosphate + CoA + H(+). The enzyme catalyses N-acetyl-alpha-D-glucosamine 1-phosphate + UTP + H(+) = UDP-N-acetyl-alpha-D-glucosamine + diphosphate. It participates in nucleotide-sugar biosynthesis; UDP-N-acetyl-alpha-D-glucosamine biosynthesis; N-acetyl-alpha-D-glucosamine 1-phosphate from alpha-D-glucosamine 6-phosphate (route II): step 2/2. Its pathway is nucleotide-sugar biosynthesis; UDP-N-acetyl-alpha-D-glucosamine biosynthesis; UDP-N-acetyl-alpha-D-glucosamine from N-acetyl-alpha-D-glucosamine 1-phosphate: step 1/1. It functions in the pathway bacterial outer membrane biogenesis; LPS lipid A biosynthesis. Catalyzes the last two sequential reactions in the de novo biosynthetic pathway for UDP-N-acetylglucosamine (UDP-GlcNAc). The C-terminal domain catalyzes the transfer of acetyl group from acetyl coenzyme A to glucosamine-1-phosphate (GlcN-1-P) to produce N-acetylglucosamine-1-phosphate (GlcNAc-1-P), which is converted into UDP-GlcNAc by the transfer of uridine 5-monophosphate (from uridine 5-triphosphate), a reaction catalyzed by the N-terminal domain. The sequence is that of Bifunctional protein GlmU from Clavibacter sepedonicus (Clavibacter michiganensis subsp. sepedonicus).